The primary structure comprises 160 residues: MAPK regulated corepressor interacting protein 2 (160 aa).

Residue M1 is modified to N-acetylmethionine. The segment at 1-64 is disordered; the sequence is MYTITKGPSK…GPWPLSSPGP (64 aa). R35 is modified (omega-N-methylarginine). A compositionally biased stretch (pro residues) spans 37–61; the sequence is PAPPTSQPPRAQPFAQPPGPWPLSS. A Phosphoserine modification is found at S61. Omega-N-methylarginine is present on R65. S82 is subject to Phosphoserine.

The protein belongs to the MCRIP family. In terms of assembly, interacts with DDX6. Interacts with MCRIP1.

The protein resides in the cytoplasm. It localises to the stress granule. Its subcellular location is the nucleus. The sequence is that of MAPK regulated corepressor interacting protein 2 (MCRIP2) from Homo sapiens (Human).